The primary structure comprises 348 residues: RNA 3'-terminal phosphate cyclase (348 aa).

ATP-binding positions include glutamine 102 and 285-288 (HMGD). The active-site Tele-AMP-histidine intermediate is histidine 311.

Belongs to the RNA 3'-terminal cyclase family. Type 1 subfamily.

It localises to the cytoplasm. It catalyses the reaction a 3'-end 3'-phospho-ribonucleotide-RNA + ATP = a 3'-end 2',3'-cyclophospho-ribonucleotide-RNA + AMP + diphosphate. In terms of biological role, catalyzes the conversion of 3'-phosphate to a 2',3'-cyclic phosphodiester at the end of RNA. The mechanism of action of the enzyme occurs in 3 steps: (A) adenylation of the enzyme by ATP; (B) transfer of adenylate to an RNA-N3'P to produce RNA-N3'PP5'A; (C) and attack of the adjacent 2'-hydroxyl on the 3'-phosphorus in the diester linkage to produce the cyclic end product. The biological role of this enzyme is unknown but it is likely to function in some aspects of cellular RNA processing. This Korarchaeum cryptofilum (strain OPF8) protein is RNA 3'-terminal phosphate cyclase.